The sequence spans 358 residues: Uroporphyrinogen decarboxylase (358 aa).

Substrate contacts are provided by residues 28–32 (RQAGR), Asp78, Tyr154, Ser208, and His324.

Belongs to the uroporphyrinogen decarboxylase family. As to quaternary structure, homodimer.

The protein resides in the cytoplasm. The enzyme catalyses uroporphyrinogen III + 4 H(+) = coproporphyrinogen III + 4 CO2. It functions in the pathway porphyrin-containing compound metabolism; protoporphyrin-IX biosynthesis; coproporphyrinogen-III from 5-aminolevulinate: step 4/4. In terms of biological role, catalyzes the decarboxylation of four acetate groups of uroporphyrinogen-III to yield coproporphyrinogen-III. The chain is Uroporphyrinogen decarboxylase from Acidiphilium cryptum (strain JF-5).